Here is a 530-residue protein sequence, read N- to C-terminus: MEEDSLYLGGEWQFNHFSKLTSSRPDAAFAEIQRTSLPEKSPLSCETRVDLCDDLAPVARQLAPREKLPLSNRRPAAVGAGLQNMGNTCYVNASLQCLTYTPPLANYMLSREHSQTCHRHKGCMLCTMQAHITRALHNPGHVIQPSQALAAGFHRGKQEDAHEFLMFTVDAMKKACLPGHKQVDHHSKDTTLIHQIFGGYWRSQIKCLHCHGISDTFDPYLDIALDIQAAQSVQQALEQLVKPEELNGENAYHCGVCLQRAPASKMLTLLTSAKVLILVLKRFSDVTGNKIAKNVQYPECLDMQPYMSQPNTGPLVYVLYAVLVHAGWSCHNGHYFSYVKAQEGQWYKMDDAEVTASSITSVLSQQAYVLFYIQKSEWERHSESVSRGREPRALGAEDTDRRATQGELKRDHPCLQAPELDEHLVERATQESTLDHWKFLQEQNKTKPEFNVRKVEGTLPPDVLVIHQSKYKCGMKNHHPEQQSSLLNLSSSTPTHQESMNTGTLASLRGRARRSKGKNKHSKRALLVCQ.

One can recognise a USP domain in the interval Ala80–Lys375. Catalysis depends on Cys89, which acts as the Nucleophile. The active-site Proton acceptor is His334. Composition is skewed to basic and acidic residues over residues Ser382–Arg392 and Asp398–His412. Disordered stretches follow at residues Ser382–His412 and Asn477–Gln530. The segment covering Thr493–Leu505 has biased composition (polar residues). A compositionally biased stretch (basic residues) spans Gly510–Arg524.

The protein belongs to the peptidase C19 family. USP17 subfamily.

Its subcellular location is the nucleus. It is found in the endoplasmic reticulum. It catalyses the reaction Thiol-dependent hydrolysis of ester, thioester, amide, peptide and isopeptide bonds formed by the C-terminal Gly of ubiquitin (a 76-residue protein attached to proteins as an intracellular targeting signal).. Deubiquitinating enzyme that removes conjugated ubiquitin from specific proteins to regulate different cellular processes that may include cell proliferation, progression through the cell cycle, apoptosis, cell migration, and the cellular response to viral infection. The protein is Ubiquitin carboxyl-terminal hydrolase 17-like protein 21 (USP17L21) of Homo sapiens (Human).